Consider the following 446-residue polypeptide: Phosphoglucosamine mutase (446 aa).

Ser101 acts as the Phosphoserine intermediate in catalysis. Mg(2+) contacts are provided by Ser101, Asp240, Asp242, and Asp244. A Phosphoserine modification is found at Ser101.

It belongs to the phosphohexose mutase family. The cofactor is Mg(2+). In terms of processing, activated by phosphorylation.

It carries out the reaction alpha-D-glucosamine 1-phosphate = D-glucosamine 6-phosphate. In terms of biological role, catalyzes the conversion of glucosamine-6-phosphate to glucosamine-1-phosphate. The polypeptide is Phosphoglucosamine mutase (Pseudomonas putida (strain W619)).